The primary structure comprises 101 residues: Phosphoprotein OPG062 (101 aa).

Residues 50–73 (KPSSPTCERRPSSPSRCERMNNPG) form a disordered region. Residues 56–68 (CERRPSSPSRCER) are compositionally biased toward basic and acidic residues.

Belongs to the orthopoxvirus OPG062 family. Self-associates to form high molecular-weight forms. Interacts with protein OPG157. Interacts with host RICTOR and RPTOR; these interactions disrupt the mTORC1 and mTORC2 crosstalk.

The protein localises to the virion. In terms of biological role, plays an essential role in virion assembly and morphogenesis. Also plays a role in the inhibition of host immune response by dysregulating mTOR. Sequesters host RICTOR and RPTOR, thereby disrupting mTORC1 and mTORC2 crosstalk. In turn, blocks the host antiviral response in part through mTOR-dependent degradation of cGAS, the primary poxvirus sensor. The sequence is that of Phosphoprotein OPG062 (OPG062) from Monkeypox virus.